Consider the following 197-residue polypeptide: Imidazoleglycerol-phosphate dehydratase (197 aa).

This sequence belongs to the imidazoleglycerol-phosphate dehydratase family.

The protein localises to the cytoplasm. The catalysed reaction is D-erythro-1-(imidazol-4-yl)glycerol 3-phosphate = 3-(imidazol-4-yl)-2-oxopropyl phosphate + H2O. The protein operates within amino-acid biosynthesis; L-histidine biosynthesis; L-histidine from 5-phospho-alpha-D-ribose 1-diphosphate: step 6/9. The sequence is that of Imidazoleglycerol-phosphate dehydratase from Syntrophus aciditrophicus (strain SB).